The following is a 127-amino-acid chain: Aspartate 1-decarboxylase (127 aa).

Residue Ser25 is the Schiff-base intermediate with substrate; via pyruvic acid of the active site. Ser25 carries the pyruvic acid (Ser) modification. Thr57 is a substrate binding site. Catalysis depends on Tyr58, which acts as the Proton donor. Residue 73-75 (GAA) participates in substrate binding.

This sequence belongs to the PanD family. Heterooctamer of four alpha and four beta subunits. The cofactor is pyruvate. In terms of processing, is synthesized initially as an inactive proenzyme, which is activated by self-cleavage at a specific serine bond to produce a beta-subunit with a hydroxyl group at its C-terminus and an alpha-subunit with a pyruvoyl group at its N-terminus.

The protein resides in the cytoplasm. The enzyme catalyses L-aspartate + H(+) = beta-alanine + CO2. It participates in cofactor biosynthesis; (R)-pantothenate biosynthesis; beta-alanine from L-aspartate: step 1/1. Functionally, catalyzes the pyruvoyl-dependent decarboxylation of aspartate to produce beta-alanine. This is Aspartate 1-decarboxylase from Staphylococcus aureus (strain MSSA476).